Here is a 291-residue protein sequence, read N- to C-terminus: Foldase protein PrsA 2 (291 aa).

The signal sequence occupies residues 1 to 20; sequence MKKKLILGLVMMMALFSLAA. Cys21 carries the N-palmitoyl cysteine lipid modification. The S-diacylglycerol cysteine moiety is linked to residue Cys21. The 92-residue stretch at 135-226 folds into the PpiC domain; it reads QPDITVSHIL…YGYHIIQMDK (92 aa).

The protein belongs to the PrsA family.

It localises to the cell membrane. The enzyme catalyses [protein]-peptidylproline (omega=180) = [protein]-peptidylproline (omega=0). In terms of biological role, plays a major role in protein secretion by helping the post-translocational extracellular folding of several secreted proteins. This chain is Foldase protein PrsA 2 (prsA2), found in Listeria innocua serovar 6a (strain ATCC BAA-680 / CLIP 11262).